We begin with the raw amino-acid sequence, 584 residues long: Extracellular serine/threonine protein kinase FAM20C (584 aa).

The Cytoplasmic segment spans residues 1 to 10; it reads MKMMLVRRFR. A propeptide spanning residues 1–92 is cleaved from the precursor; sequence MKMMLVRRFR…PNKHTLRILQ (92 aa). A helical; Signal-anchor for type II membrane protein membrane pass occupies residues 11–31; the sequence is VLILMVFLVACALHIALDLLP. Residues 32-584 lie on the Lumenal side of the membrane; the sequence is RLERRGARPS…DTEHRAASAR (553 aa). 2 disordered regions span residues 62–81 and 94–159; these read QVRGRPGEPPAASSAAGDAG and FSSD…GDAS. Low complexity-rich tracts occupy residues 71 to 81 and 95 to 112; these read PAASSAAGDAG and SSDPSSNLSSHSLEKLPP. An N-linked (GlcNAc...) asparagine glycan is attached at Asn-101. Ser-106 carries the post-translational modification Phosphoserine. Basic and acidic residues predominate over residues 116–149; the sequence is PAERALRGRDPGALRPHDPAHRPLLRDPGPRRSE. ATP is bound by residues Gln-269, Lys-285, and Glu-306. Residue Glu-306 participates in Mn(2+) binding. An N-linked (GlcNAc...) asparagine glycan is attached at Asn-335. The segment at 354–565 is kinase domain; the sequence is FISPANNICF…AVRDCVERNG (212 aa). 2 disulfide bridges follow: Cys-362/Cys-378 and Cys-367/Cys-371. An ATP-binding site is contributed by 389 to 392; the sequence is AAFL. 2 cysteine pairs are disulfide-bonded: Cys-426–Cys-500 and Cys-501–Cys-560. The active site involves Asp-458. Glu-463 is a binding site for ATP. Asn-470 carries N-linked (GlcNAc...) asparagine glycosylation. Asp-478 provides a ligand contact to ATP. A Mn(2+)-binding site is contributed by Asp-478.

It belongs to the FAM20 family. In terms of assembly, homodimer; disulfide-linked. Interacts with FAM20A; probably forming a heterotetramer of 2 subunits of FAM20A and 2 subunits of FAM20C. Interacts with protease MBTPS1/S1P; the interaction results in FAM20C cleavage and secretion. Interacts with COPII components SEC23A and SEC24A; transport of FAM20C from the endoplasmic reticulum to the Golgi is likely to be mediated by COPII vesicles. Mn(2+) is required as a cofactor. N-glycosylation is required for folding. Post-translationally, autophosphorylated. In terms of processing, propeptide cleavage by MBTPS1/S1P promotes FAM20C secretion and maximal kinase activity which is essential for efficient osteoblast differentiation and biomineralization. In terms of tissue distribution, widely expressed.

It is found in the golgi apparatus membrane. The protein resides in the secreted. The protein localises to the endoplasmic reticulum. The enzyme catalyses L-seryl-[protein] + ATP = O-phospho-L-seryl-[protein] + ADP + H(+). It carries out the reaction L-threonyl-[protein] + ATP = O-phospho-L-threonyl-[protein] + ADP + H(+). With respect to regulation, serine/threonine protein kinase activity is increased upon interaction with FAM20A. Functionally, golgi serine/threonine protein kinase that phosphorylates secretory pathway proteins within Ser-x-Glu/pSer motifs and plays a key role in biomineralization of bones and teeth. Constitutes the main protein kinase for extracellular proteins, generating the majority of the extracellular phosphoproteome. Mainly phosphorylates proteins within the Ser-x-Glu/pSer motif, but also displays a broader substrate specificity. Phosphorylates ERO1A, enhancing its activity which is required to maintain endoplasmic reticulum redox homeostasis and for oxidative protein folding. During endoplasmic reticulum stress, phosphorylates P4HB/PDIA1 which induces a functional switch, causing P4HB to change from an oxidoreductase to a molecular chaperone. This is critical to maintain ER proteostasis and reduce cell death under ER stress. Phosphorylation of P4HB also promotes its interaction with ERN1, leading to reduced activity of ERN1, a key sensor for the endoplasmic reticulum unfolded protein response. Required for osteoblast differentiation and mineralization. Phosphorylates casein as well as a number of proteins involved in biomineralization such as AMELX, AMTN, ENAM and SPP1/OPN. In addition to its role in biomineralization, also plays a role in lipid homeostasis, wound healing and cell migration and adhesion. This chain is Extracellular serine/threonine protein kinase FAM20C, found in Homo sapiens (Human).